The primary structure comprises 295 residues: Small ribosomal subunit protein uS2 (295 aa).

The tract at residues 264-295 (KFSKTKNIDEETNTEFEQALNDTDENKNADNA) is disordered.

This sequence belongs to the universal ribosomal protein uS2 family.

The polypeptide is Small ribosomal subunit protein uS2 (Rickettsia akari (strain Hartford)).